The following is a 290-amino-acid chain: Acetyl-coenzyme A carboxylase carboxyl transferase subunit beta (290 aa).

The region spanning I28–N290 is the CoA carboxyltransferase N-terminal domain. Positions 32, 35, 51, and 54 each coordinate Zn(2+). The C4-type zinc-finger motif lies at C32–C54.

This sequence belongs to the AccD/PCCB family. In terms of assembly, acetyl-CoA carboxylase is a heterohexamer composed of biotin carboxyl carrier protein (AccB), biotin carboxylase (AccC) and two subunits each of ACCase subunit alpha (AccA) and ACCase subunit beta (AccD). Zn(2+) is required as a cofactor.

The protein resides in the cytoplasm. The catalysed reaction is N(6)-carboxybiotinyl-L-lysyl-[protein] + acetyl-CoA = N(6)-biotinyl-L-lysyl-[protein] + malonyl-CoA. It participates in lipid metabolism; malonyl-CoA biosynthesis; malonyl-CoA from acetyl-CoA: step 1/1. Component of the acetyl coenzyme A carboxylase (ACC) complex. Biotin carboxylase (BC) catalyzes the carboxylation of biotin on its carrier protein (BCCP) and then the CO(2) group is transferred by the transcarboxylase to acetyl-CoA to form malonyl-CoA. The protein is Acetyl-coenzyme A carboxylase carboxyl transferase subunit beta of Anoxybacillus flavithermus (strain DSM 21510 / WK1).